Consider the following 745-residue polypeptide: DNA ligase (745 aa).

Residues 1–27 are disordered; the sequence is MRNHGPGSERKDACVSAPDPTFSDDVP. Residues 57–61, 106–107, and Glu-135 each bind NAD(+); these read DAEYD and SL. Lys-137 acts as the N6-AMP-lysine intermediate in catalysis. Residues Arg-158 and Glu-197 each contribute to the NAD(+) site. The segment at 216-235 is disordered; sequence GKPPFANPRNAAAGSLRQKD. Residues Lys-313 and Lys-337 each coordinate NAD(+). Zn(2+) contacts are provided by Cys-431, Cys-434, Cys-450, and Cys-456. One can recognise a BRCT domain in the interval 649-738; that stretch reads DGPRLLDGIT…PEAARAARLS (90 aa).

The protein belongs to the NAD-dependent DNA ligase family. LigA subfamily. Requires Mg(2+) as cofactor. The cofactor is Mn(2+).

It catalyses the reaction NAD(+) + (deoxyribonucleotide)n-3'-hydroxyl + 5'-phospho-(deoxyribonucleotide)m = (deoxyribonucleotide)n+m + AMP + beta-nicotinamide D-nucleotide.. DNA ligase that catalyzes the formation of phosphodiester linkages between 5'-phosphoryl and 3'-hydroxyl groups in double-stranded DNA using NAD as a coenzyme and as the energy source for the reaction. It is essential for DNA replication and repair of damaged DNA. This chain is DNA ligase, found in Thermobifida fusca (strain YX).